The chain runs to 92 residues: MPRSLKKGPFIDIALLRKVEQAVEIRDKKPIRTWSRRSTIFPKMVGLTMLIHNGRQHIPVFITEDMVGHKLGEFVLTRTYRGHTADKKVKKR.

The protein belongs to the universal ribosomal protein uS19 family.

In terms of biological role, protein S19 forms a complex with S13 that binds strongly to the 16S ribosomal RNA. The chain is Small ribosomal subunit protein uS19 from Buchnera aphidicola subsp. Baizongia pistaciae (strain Bp).